Here is a 181-residue protein sequence, read N- to C-terminus: Protein GrpE (181 aa).

Belongs to the GrpE family. In terms of assembly, homodimer.

It is found in the cytoplasm. Functionally, participates actively in the response to hyperosmotic and heat shock by preventing the aggregation of stress-denatured proteins, in association with DnaK and GrpE. It is the nucleotide exchange factor for DnaK and may function as a thermosensor. Unfolded proteins bind initially to DnaJ; upon interaction with the DnaJ-bound protein, DnaK hydrolyzes its bound ATP, resulting in the formation of a stable complex. GrpE releases ADP from DnaK; ATP binding to DnaK triggers the release of the substrate protein, thus completing the reaction cycle. Several rounds of ATP-dependent interactions between DnaJ, DnaK and GrpE are required for fully efficient folding. The polypeptide is Protein GrpE (Verminephrobacter eiseniae (strain EF01-2)).